The following is a 366-amino-acid chain: UDP-N-acetylglucosamine--N-acetylmuramyl-(pentapeptide) pyrophosphoryl-undecaprenol N-acetylglucosamine transferase (366 aa).

Residues 14–16 (TGG), N128, R169, S201, I251, and Q296 contribute to the UDP-N-acetyl-alpha-D-glucosamine site.

The protein belongs to the glycosyltransferase 28 family. MurG subfamily.

The protein resides in the cell inner membrane. It carries out the reaction di-trans,octa-cis-undecaprenyl diphospho-N-acetyl-alpha-D-muramoyl-L-alanyl-D-glutamyl-meso-2,6-diaminopimeloyl-D-alanyl-D-alanine + UDP-N-acetyl-alpha-D-glucosamine = di-trans,octa-cis-undecaprenyl diphospho-[N-acetyl-alpha-D-glucosaminyl-(1-&gt;4)]-N-acetyl-alpha-D-muramoyl-L-alanyl-D-glutamyl-meso-2,6-diaminopimeloyl-D-alanyl-D-alanine + UDP + H(+). The protein operates within cell wall biogenesis; peptidoglycan biosynthesis. Functionally, cell wall formation. Catalyzes the transfer of a GlcNAc subunit on undecaprenyl-pyrophosphoryl-MurNAc-pentapeptide (lipid intermediate I) to form undecaprenyl-pyrophosphoryl-MurNAc-(pentapeptide)GlcNAc (lipid intermediate II). This is UDP-N-acetylglucosamine--N-acetylmuramyl-(pentapeptide) pyrophosphoryl-undecaprenol N-acetylglucosamine transferase from Christiangramia forsetii (strain DSM 17595 / CGMCC 1.15422 / KT0803) (Gramella forsetii).